Reading from the N-terminus, the 245-residue chain is Nodulation protein G (245 aa).

NAD(+) is bound at residue 11–35; it reads VTGASGAIGGAIARVLHAQGAIVGL. S139 contacts substrate. Residue Y152 is the Proton acceptor of the active site.

Belongs to the short-chain dehydrogenases/reductases (SDR) family.

Proposed to modify Nod factor fatty acyl chain. This chain is Nodulation protein G (nodG), found in Rhizobium meliloti (strain 1021) (Ensifer meliloti).